We begin with the raw amino-acid sequence, 80 residues long: MPKRVLQGVVVSDKNDKTVVVKVERRYSHPLLQKTVRQSKKYKAHDENNQFKVGDFVSIQESAPISKDKRWVVLTSEAAG.

The protein belongs to the universal ribosomal protein uS17 family. In terms of assembly, part of the 30S ribosomal subunit.

Functionally, one of the primary rRNA binding proteins, it binds specifically to the 5'-end of 16S ribosomal RNA. In Brucella abortus (strain S19), this protein is Small ribosomal subunit protein uS17.